The following is a 743-amino-acid chain: Dynein regulatory complex protein 1 homolog (743 aa).

Composition is skewed to acidic residues over residues 1-10 (MDDNEDELEE) and 19-28 (SVEEEEEVEP). The interval 1–34 (MDDNEDELEEHQELVSDGSVEEEEEVEPDLGPVD) is disordered. Coiled coils occupy residues 175-332 (DQIE…VLMN) and 395-416 (KLHS…NNRE). The tract at residues 599–620 (NRLQGAAGGQPDEKEHRSTGDT) is disordered. Residues 715–742 (KMRVQYDAEVVFLRRQNEELRHLLQKFT) adopt a coiled-coil conformation.

The protein belongs to the DRC1 family.

The polypeptide is Dynein regulatory complex protein 1 homolog (Drosophila melanogaster (Fruit fly)).